The sequence spans 533 residues: Chromosomal replication initiator protein DnaA (533 aa).

Residues 1–72 (MNDFWQHCSA…DLARDFWNAP (72 aa)) form a domain I, interacts with DnaA modulators region. The tract at residues 72–196 (PIEVQFVLDP…EAADSMYERS (125 aa)) is domain II. The interval 83–120 (AGQRSPAGATPLAPRAPLPSANPAPVAPGPASAPAVDA) is disordered. Pro residues predominate over residues 96 to 110 (PRAPLPSANPAPVAP). Residues 111-120 (GPASAPAVDA) are compositionally biased toward low complexity. Positions 197-413 (KLNPVLTFDN…GALRKILAYS (217 aa)) are domain III, AAA+ region. Positions 241, 243, 244, and 245 each coordinate ATP. The domain IV, binds dsDNA stretch occupies residues 414–533 (KFHGREITIE…LHVLEQTLKG (120 aa)).

This sequence belongs to the DnaA family. Oligomerizes as a right-handed, spiral filament on DNA at oriC.

The protein localises to the cytoplasm. In terms of biological role, plays an essential role in the initiation and regulation of chromosomal replication. ATP-DnaA binds to the origin of replication (oriC) to initiate formation of the DNA replication initiation complex once per cell cycle. Binds the DnaA box (a 9 base pair repeat at the origin) and separates the double-stranded (ds)DNA. Forms a right-handed helical filament on oriC DNA; dsDNA binds to the exterior of the filament while single-stranded (ss)DNA is stabiized in the filament's interior. The ATP-DnaA-oriC complex binds and stabilizes one strand of the AT-rich DNA unwinding element (DUE), permitting loading of DNA polymerase. After initiation quickly degrades to an ADP-DnaA complex that is not apt for DNA replication. Binds acidic phospholipids. In Burkholderia pseudomallei (strain 1710b), this protein is Chromosomal replication initiator protein DnaA.